Here is a 37-residue protein sequence, read N- to C-terminus: Photosystem II reaction center protein L (37 aa).

Residues 1-13 lie on the Cytoplasmic side of the membrane; the sequence is MEPNPNRQPVELN. A helical membrane pass occupies residues 14–35; that stretch reads RTSLYLGLLLILVLALLFSSYF. Topologically, residues 36–37 are lumenal; that stretch reads FN.

PSII is composed of 1 copy each of membrane proteins PsbA, PsbB, PsbC, PsbD, PsbE, PsbF, PsbH, PsbI, PsbJ, PsbK, PsbL, PsbM, PsbT, PsbX, PsbY, PsbZ, Psb30/Ycf12, peripheral proteins PsbO, CyanoQ (PsbQ), PsbU, PsbV and a large number of cofactors. It forms dimeric complexes. Part of a photosystem II (PSII) assembly intermediate complex PSII-I; crystallized from a strain deleted of psbJ, it forms monomeric PSII before addition of the oxygen evolving complex. PSII-I includes 3 assembly factors not found in mature PSII (Psb27, Psb28 and Psb34). Requires PSII binds multiple chlorophylls, carotenoids and specific lipids. as cofactor.

It localises to the cellular thylakoid membrane. In terms of biological role, one of the components of the core complex of photosystem II (PSII). PSII is a light-driven water:plastoquinone oxidoreductase that uses light energy to abstract electrons from H(2)O, generating O(2) and a proton gradient subsequently used for ATP formation. It consists of a core antenna complex that captures photons, and an electron transfer chain that converts photonic excitation into a charge separation. This subunit is found at the monomer-monomer interface and is required for correct PSII assembly and/or dimerization. This subunit may make specific contacts with lipid(s). This is Photosystem II reaction center protein L from Thermosynechococcus vestitus (strain NIES-2133 / IAM M-273 / BP-1).